The chain runs to 346 residues: Large ribosomal subunit protein uL10 (346 aa).

The interval 307 to 346 (AAAVAKEPEKKEEVKEEEEEEEEEDHSEEDGMAGLGSLFG) is disordered. Residues 321-337 (KEEEEEEEEEDHSEEDG) are compositionally biased toward acidic residues.

The protein belongs to the universal ribosomal protein uL10 family. In terms of assembly, part of the 50S ribosomal subunit. Forms part of the ribosomal stalk which helps the ribosome interact with GTP-bound translation factors. Forms both a pentameric L10(L12)2(L12)2 and heptameric L10(L12)2(L12)2(L12)2 complex, where L10 forms an elongated spine to which the L12 dimers bind in a sequential fashion. The proportion of heptameric complexes increases during cell growth.

In terms of biological role, forms part of the ribosomal stalk, playing a central role in the interaction of the ribosome with GTP-bound translation factors. This chain is Large ribosomal subunit protein uL10, found in Methanosarcina barkeri (strain Fusaro / DSM 804).